Consider the following 554-residue polypeptide: Glucose-6-phosphate isomerase (554 aa).

Glu-359 (proton donor) is an active-site residue. Catalysis depends on residues His-390 and Lys-518.

This sequence belongs to the GPI family.

It localises to the cytoplasm. It carries out the reaction alpha-D-glucose 6-phosphate = beta-D-fructose 6-phosphate. Its pathway is carbohydrate biosynthesis; gluconeogenesis. The protein operates within carbohydrate degradation; glycolysis; D-glyceraldehyde 3-phosphate and glycerone phosphate from D-glucose: step 2/4. Functionally, catalyzes the reversible isomerization of glucose-6-phosphate to fructose-6-phosphate. This is Glucose-6-phosphate isomerase from Pseudomonas savastanoi pv. phaseolicola (strain 1448A / Race 6) (Pseudomonas syringae pv. phaseolicola (strain 1448A / Race 6)).